A 1352-amino-acid polypeptide reads, in one-letter code: Ubiquitin carboxyl-terminal hydrolase 31 (1352 aa).

The span at 1-16 shows a compositional bias: low complexity; sequence MSKVTAPGSGPPAAAS. Disordered regions lie at residues 1-62 and 79-119; these read MSKV…RSVG and SSEG…PPAC. Residues 32 to 43 show a composition bias toward gly residues; it reads RAGGGGAGGPGA. A compositionally biased stretch (low complexity) spans 44–62; it reads SGPAAPSSPSSPSSARSVG. Positions 95–117 are enriched in pro residues; the sequence is PPGPAAAPTPPPCPPPPASPAPP. The USP domain occupies 128–765; sequence AGLRNHGNTC…TAYILFYQRR (638 aa). Residue Cys-137 is the Nucleophile of the active site. Positions 162 to 185 are disordered; the sequence is RAGRPEPSPDPEQPAGRGAQGQGE. Residue His-723 is the Proton acceptor of the active site. Disordered regions lie at residues 812–835, 919–939, and 951–1352; these read LASL…FSTR, SSSY…AVGR, and DESD…QKPQ. Residues 958–970 show a composition bias toward polar residues; sequence LNSSVVDTQSKHS. 4 stretches are compositionally biased toward low complexity: residues 992–1001, 1051–1070, 1078–1089, and 1101–1138; these read VDQSDSVDSS, SSLS…SLKP, DSSSRGSGRHSS, and PKSQ…GPAT. The segment covering 1148–1159 has biased composition (basic and acidic residues); sequence RTSDHSLSREGS. The span at 1160–1181 shows a compositional bias: polar residues; the sequence is RQSLGSDRASATSTSKPNSPRV. Residues 1198 to 1210 are compositionally biased toward low complexity; that stretch reads SSSMASLRSPSTS. Composition is skewed to basic and acidic residues over residues 1215-1225 and 1234-1243; these read LKRDSKSEDKG and RQKETRRSTD. Residues 1251–1264 are compositionally biased toward low complexity; the sequence is SKKAGGSSVKSVCK. An N6-acetyllysine modification is found at Lys-1264. Polar residues-rich tracts occupy residues 1278–1290 and 1341–1352; these read PASQ…TTGK and MQTSARPSQKPQ.

It belongs to the peptidase C19 family. In terms of processing, acetylated at Lys-1264. Acetylation decreases activity. Deacetylated by SIRT1. Widely expressed.

It catalyses the reaction Thiol-dependent hydrolysis of ester, thioester, amide, peptide and isopeptide bonds formed by the C-terminal Gly of ubiquitin (a 76-residue protein attached to proteins as an intracellular targeting signal).. Its function is as follows. Deubiquitinase that recognizes and hydrolyzes the peptide bond at the C-terminal Gly of ubiquitin. May play a role in the regulation of NF-kappa-B signaling pathway by deubiquitinating TRAF2. (Microbial infection) Plays a positive role in foot-and-mouth disease and classical swine fever viral infection. Mechanistically, associates with internal ribosomal entry site (IRES) element within the 5'-untranslated region of viral genomes to promote translation of the virus-encoded polyprotein. The sequence is that of Ubiquitin carboxyl-terminal hydrolase 31 (USP31) from Homo sapiens (Human).